The chain runs to 211 residues: Arginine exporter protein ArgO (211 aa).

6 consecutive transmembrane segments (helical) span residues 1–21 (MISYYFQGFALGAAMILPLGP), 37–57 (LMIALLCALSDLVLISAGIFG), 68–88 (LLALVTWGGVAFLLWYGFGAL), 111–131 (IIATMLAVTWLNPHVYLDTFV), 147–167 (WFALGTISASFLWFFGLALLA), and 179–199 (AQRIINILVGVVMWLIAFQLA).

Belongs to the LysE/ArgO transporter (TC 2.A.75) family.

It is found in the cell inner membrane. The enzyme catalyses L-arginine(in) = L-arginine(out). Its function is as follows. Involved in the export of arginine. Important to control the intracellular level of arginine and the correct balance between arginine and lysine. This is Arginine exporter protein ArgO from Salmonella choleraesuis (strain SC-B67).